We begin with the raw amino-acid sequence, 714 residues long: Structure-specific endonuclease subunit SLX4 2 (714 aa).

Basic and acidic residues-rich tracts occupy residues 1–14 (MSPE…EDNL) and 24–34 (IHEETLAEESH). Disordered stretches follow at residues 1 to 114 (MSPE…EQQG) and 338 to 369 (SSGP…KTPQ). Polar residues predominate over residues 36-46 (QAIQRSISRLS). Residues 79 to 92 (KTKKRKLKVSKPRK) are compositionally biased toward basic residues.

This sequence belongs to the SLX4 family. In terms of assembly, forms a heterodimer with SLX1. Phosphorylated in response to DNA damage.

The protein localises to the nucleus. In terms of biological role, regulatory subunit of the SLX1-SLX4 structure-specific endonuclease that resolves DNA secondary structures generated during DNA repair and recombination. Has endonuclease activity towards branched DNA substrates, introducing single-strand cuts in duplex DNA close to junctions with ss-DNA. The polypeptide is Structure-specific endonuclease subunit SLX4 2 (Candida tropicalis (strain ATCC MYA-3404 / T1) (Yeast)).